The chain runs to 64 residues: Large ribosomal subunit protein bL35 (64 aa).

Belongs to the bacterial ribosomal protein bL35 family.

This chain is Large ribosomal subunit protein bL35, found in Ureaplasma parvum serovar 3 (strain ATCC 27815 / 27 / NCTC 11736).